A 640-amino-acid chain; its full sequence is Guanylate-binding protein 4 (640 aa).

The segment at 1 to 325 is GTPase domain (Globular); that stretch reads MGERTLHAAV…DAINSGAVPC (325 aa). Residues 50–292 form the GB1/RHD3-type G domain; it reads SQPVVVVAIV…FCSYIFTHAK (243 aa). GTP-binding positions include 60-67, 82-84, and 112-116; these read GLYRTGKS, LGS, and DTEGL. Positions 499 to 612 form a coiled coil; it reads GEKAIAAERA…EQLRLLKILD (114 aa).

Belongs to the TRAFAC class dynamin-like GTPase superfamily. GB1/RHD3 GTPase family. GB1 subfamily. Heterodimer with other family members, including GBP1, GBP2 and GBP5. Dimerization regulates subcellular location. Interacts with IRF7; preventing interaction between TRAF6 and IRF7, resulting in impaired TRAF6-mediated IRF7 ubiquitination. Post-translationally, (Microbial infection) Ubiquitinated by S.flexneri IpaH9.8, leading to its degradation by the proteasome, thereby preventing its ability to promote host defense against bacterial infection.

The protein localises to the golgi apparatus membrane. The protein resides in the cytoplasm. It is found in the nucleus. It localises to the perinuclear region. It carries out the reaction GTP + H2O = GDP + phosphate + H(+). Its function is as follows. Interferon (IFN)-inducible GTPase that plays important roles in innate immunity against a diverse range of bacterial, viral and protozoan pathogens. Negatively regulates the antiviral response by inhibiting activation of IRF7 transcription factor. This is Guanylate-binding protein 4 from Homo sapiens (Human).